Reading from the N-terminus, the 269-residue chain is GTP cyclohydrolase FolE2 (269 aa).

This sequence belongs to the GTP cyclohydrolase IV family.

The catalysed reaction is GTP + H2O = 7,8-dihydroneopterin 3'-triphosphate + formate + H(+). Its pathway is cofactor biosynthesis; 7,8-dihydroneopterin triphosphate biosynthesis; 7,8-dihydroneopterin triphosphate from GTP: step 1/1. Functionally, converts GTP to 7,8-dihydroneopterin triphosphate. The sequence is that of GTP cyclohydrolase FolE2 from Burkholderia mallei (strain NCTC 10229).